Here is a 78-residue protein sequence, read N- to C-terminus: uncharacterized protein (78 aa).

Positions 58–78 (EANDPEKKIPSTAAKAISLSP) are disordered.

This is an uncharacterized protein from Vaccinia virus (strain Copenhagen) (VACV).